A 268-amino-acid chain; its full sequence is Small ribosomal subunit protein uS2 (268 aa).

It belongs to the universal ribosomal protein uS2 family.

This chain is Small ribosomal subunit protein uS2, found in Coprothermobacter proteolyticus (strain ATCC 35245 / DSM 5265 / OCM 4 / BT).